A 237-amino-acid chain; its full sequence is AA9 family lytic polysaccharide monooxygenase C (237 aa).

A signal peptide spans 1–15 (MKVLAPLILAGAASA). Cu(2+)-binding residues include His16 and His99. 2 disulfide bridges follow: Cys54–Cys185 and Cys155–Cys237. The N-linked (GlcNAc...) asparagine glycan is linked to Asn112. Positions 171 and 180 each coordinate O2. Residue Tyr182 participates in Cu(2+) binding.

The protein belongs to the polysaccharide monooxygenase AA9 family. Cu(2+) is required as a cofactor.

The protein localises to the secreted. The catalysed reaction is [(1-&gt;4)-beta-D-glucosyl]n+m + reduced acceptor + O2 = 4-dehydro-beta-D-glucosyl-[(1-&gt;4)-beta-D-glucosyl]n-1 + [(1-&gt;4)-beta-D-glucosyl]m + acceptor + H2O.. With respect to regulation, is able to utilize various natural phenolic compounds as reducing agents. Most of these reducing agents are present in plants, either free or as lignin building blocks, such as sinapic acid, or as flavonoids such as catechin and dopamine. Phenolic compounds with 1,2-benzenediol and 1,2,3-benzenetriol moieties yield the highest release of oxidized and non-oxidized glucooligosaccharides from cellulose compared to monophenols or sulfur-containing compounds. Functionally, lytic polysaccharide monooxygenase (LPMO) that depolymerizes crystalline and amorphous polysaccharides via the oxidation of scissile alpha- or beta-(1-4)-glycosidic bonds, yielding C4 oxidation products. Catalysis by LPMOs requires the reduction of the active-site copper from Cu(II) to Cu(I) by a reducing agent and H(2)O(2) or O(2) as a cosubstrate. Shows oxidative cleavage of beta-(1-3, 1-4)-glucan from oat spelt or xyloglucan from tamarind seed, in addition to cellulose. The polypeptide is AA9 family lytic polysaccharide monooxygenase C (Thermothelomyces thermophilus (strain ATCC 42464 / BCRC 31852 / DSM 1799) (Sporotrichum thermophile)).